A 188-amino-acid chain; its full sequence is dCTP deaminase (188 aa).

Residues lysine 111–arginine 116, threonine 135–glutamate 137, glutamine 156, tyrosine 170, and glutamine 180 each bind dCTP. Residue glutamate 137 is the Proton donor/acceptor of the active site.

This sequence belongs to the dCTP deaminase family. Homotrimer.

It carries out the reaction dCTP + H2O + H(+) = dUTP + NH4(+). It functions in the pathway pyrimidine metabolism; dUMP biosynthesis; dUMP from dCTP (dUTP route): step 1/2. Its function is as follows. Catalyzes the deamination of dCTP to dUTP. This chain is dCTP deaminase, found in Pseudomonas syringae pv. tomato (strain ATCC BAA-871 / DC3000).